Reading from the N-terminus, the 106-residue chain is Integration host factor subunit alpha (106 aa).

The protein belongs to the bacterial histone-like protein family. In terms of assembly, heterodimer of an alpha and a beta chain.

This protein is one of the two subunits of integration host factor, a specific DNA-binding protein that functions in genetic recombination as well as in transcriptional and translational control. The protein is Integration host factor subunit alpha of Methylobacterium radiotolerans (strain ATCC 27329 / DSM 1819 / JCM 2831 / NBRC 15690 / NCIMB 10815 / 0-1).